A 418-amino-acid polypeptide reads, in one-letter code: Protein FAM53A (418 aa).

2 disordered regions span residues 198–236 (TSPV…FNPR) and 248–269 (ETGN…LSRR). A compositionally biased stretch (low complexity) spans 205–229 (SSASSGFVDSSEGSTSSSTRWNSGG). Residues 248-265 (ETGNLLPSANSTPTSTPE) show a composition bias toward polar residues. The Nuclear localization signal motif lies at 285–293 (KKSRLKRRR).

Belongs to the FAM53 family.

The protein localises to the nucleus. Functionally, may play an important role in neural development; the dorsomedial roof of the third ventricle. The polypeptide is Protein FAM53A (Gallus gallus (Chicken)).